The primary structure comprises 551 residues: Solute carrier family 22 member 27 (551 aa).

The Cytoplasmic segment spans residues 1 to 15 (MSFQELLNQVGSLGR). The helical transmembrane segment at 16–36 (FQILQIVFLLLLNAIVVPHIA) threads the bilayer. Residues 37–145 (MENFTAAIPN…DLVCESQALN (109 aa)) are Extracellular-facing. Residues Asn-39, Asn-56, Asn-62, Asn-102, and Asn-107 are each glycosylated (N-linked (GlcNAc...) asparagine). A helical transmembrane segment spans residues 146–166 (SVTKFSFMIGLFIGGIICGHL). Over 167–173 (SDRLGRK) the chain is Cytoplasmic. A helical transmembrane segment spans residues 174-194 (FILTCALLQFAITETCVAFAP). Topologically, residues 195–203 (SFFIYCSLR) are extracellular. The helical transmembrane segment at 204-224 (FLAGLSVEPILVNSHLLMLEW) threads the bilayer. The Cytoplasmic segment spans residues 225-234 (TSPKFLTMMA). Residues 235–255 (ALLSCAPNIGYMISAGLAFLF) traverse the membrane as a helical segment. The Extracellular portion of the chain corresponds to 256-258 (RIW). The chain crosses the membrane as a helical span at residues 259-279 (HHLQLTMSVPIFFFLILTRWL). Topologically, residues 280-348 (SESARWLIVT…LFHTSILRKR (69 aa)) are cytoplasmic. The helical transmembrane segment at 349-369 (ICVLSFMRLFFTVSIFGLAVH) threads the bilayer. Residues 370-376 (LQHLSSN) are Extracellular-facing. A helical membrane pass occupies residues 377-397 (IILLQFLISALAILVSVIGPF). Topologically, residues 398–405 (VLNHIGRR) are cytoplasmic. A helical transmembrane segment spans residues 406–426 (ITYLVLMSLRGIFILIAVFVP). Residues 427 to 432 (QEMQTL) lie on the Extracellular side of the membrane. The helical transmembrane segment at 433–453 (RIIMATLAEGISSLCVGVSRL) threads the bilayer. The Cytoplasmic portion of the chain corresponds to 454 to 467 (HTNELLPTTLRATA). The chain crosses the membrane as a helical span at residues 468 to 488 (VGVIGFFGNSGSFLSPLFMLL). Topologically, residues 489-494 (ATYYAN) are extracellular. A helical membrane pass occupies residues 495 to 515 (MPWIFYGGFSIFNAFTVFLLP). At 516–551 (ETKNQPLPDSTHDVGNDWKESRKGKKEDPIIKVTRF) the chain is on the cytoplasmic side. The interval 523–551 (PDSTHDVGNDWKESRKGKKEDPIIKVTRF) is disordered. Residues 525–545 (STHDVGNDWKESRKGKKEDPI) are compositionally biased toward basic and acidic residues.

It belongs to the major facilitator (TC 2.A.1) superfamily. Organic cation transporter (TC 2.A.1.19) family. Expressed in proximal kidney tubules, and in liver hepatocytes (at protein level).

It localises to the cell membrane. Functionally, does not appear to have transporter activity. Its function is as follows. Sodium-independent organic anion transporter which exhibits high specificity for L-carnitine. Can also transport salicylic acid and the drug cimetidine. The polypeptide is Solute carrier family 22 member 27 (Mus musculus (Mouse)).